We begin with the raw amino-acid sequence, 65 residues long: Sperm protamine P1 (65 aa).

Positions methionine 1–tyrosine 65 are disordered.

Belongs to the protamine P1 family. As to expression, testis.

It localises to the nucleus. Its subcellular location is the chromosome. Functionally, protamines substitute for histones in the chromatin of sperm during the haploid phase of spermatogenesis. They compact sperm DNA into a highly condensed, stable and inactive complex. The sequence is that of Sperm protamine P1 (PRM1) from Lagorchestes hirsutus (Rufous hare-wallaby).